The primary structure comprises 512 residues: 2,3-bisphosphoglycerate-independent phosphoglycerate mutase (512 aa).

Residues D11 and S61 each contribute to the Mn(2+) site. The active-site Phosphoserine intermediate is the S61. Substrate is bound by residues H122, 152–153 (RD), R184, R190, 259–262 (RADR), and K332. The Mn(2+) site is built by D399, H403, D440, H441, and H459.

The protein belongs to the BPG-independent phosphoglycerate mutase family. As to quaternary structure, monomer. The cofactor is Mn(2+).

The enzyme catalyses (2R)-2-phosphoglycerate = (2R)-3-phosphoglycerate. It participates in carbohydrate degradation; glycolysis; pyruvate from D-glyceraldehyde 3-phosphate: step 3/5. Functionally, catalyzes the interconversion of 2-phosphoglycerate and 3-phosphoglycerate. This is 2,3-bisphosphoglycerate-independent phosphoglycerate mutase from Francisella tularensis subsp. holarctica (strain FTNF002-00 / FTA).